Reading from the N-terminus, the 857-residue chain is Inactive rhomboid protein 1 (857 aa).

Residues 1 to 413 are Cytoplasmic-facing; the sequence is MAELRRDSTS…HRPFFTYWIT (413 aa). The interval 283–307 is disordered; sequence FESPSDSTMKDVDSKQLDESELTGS. Residues 290–300 show a composition bias toward basic and acidic residues; sequence TMKDVDSKQLD. The chain crosses the membrane as a helical span at residues 414–434; that stretch reads FVHILITILAVCIYGIAPVGF. Residues 435–661 are Lumenal-facing; the sequence is SQHETVDSVL…PDQFYRLWLS (227 aa). The N-linked (GlcNAc...) asparagine glycan is linked to N585. Residues 662-682 form a helical membrane-spanning segment; the sequence is LFLHAGILHCLVSVCFQMTIL. The Cytoplasmic portion of the chain corresponds to 683 to 693; it reads RDLEKLAGWLR. The chain crosses the membrane as a helical span at residues 694 to 714; the sequence is ISIIYILSGITGNLASAIFLP. Over 715 to 716 the chain is Lumenal; it reads YR. A helical transmembrane segment spans residues 717 to 737; the sequence is AEVGPAGSQFGILACLFVELI. The Cytoplasmic segment spans residues 738–748; sequence QSWQILAQPWR. The chain crosses the membrane as a helical span at residues 749-769; the sequence is AFTKLLCVVLFLFAFGLLPWI. The Lumenal portion of the chain corresponds to 770–774; that stretch reads DNFAH. The chain crosses the membrane as a helical span at residues 775–795; it reads ISGFISGFFLSFAFLPYISFG. Over 796 to 805 the chain is Cytoplasmic; it reads RLDMYRKRCQ. Residues 806–826 traverse the membrane as a helical segment; the sequence is IIIFLVVFLGLFAGLVVLFYV. Topologically, residues 827-857 are lumenal; that stretch reads HPIKCEWCELLTCIPFTDKFCEKYDLNAHLH.

This sequence belongs to the peptidase S54 family.

The protein resides in the endoplasmic reticulum membrane. It is found in the golgi apparatus membrane. In terms of biological role, regulates ADAM17 protease, a sheddase of the epidermal growth factor (EGF) receptor ligands and TNF, thereby plays a role in sleep, cell survival, proliferation, migration and inflammation. Does not exhibit any protease activity on its own. The chain is Inactive rhomboid protein 1 (rhbdf1) from Danio rerio (Zebrafish).